The following is a 508-amino-acid chain: UTP--glucose-1-phosphate uridylyltransferase (508 aa).

Position 13 is a phosphoserine (Ser-13). UTP contacts are provided by residues 113–116 (LNGG), Lys-127, Gln-190, and Gly-222. 115 to 116 (GG) contributes to the substrate binding site. Mg(2+) is bound at residue Lys-127. Residues His-223 and 251–253 (NID) contribute to the substrate site. 2 residues coordinate UTP: Asp-253 and Lys-396. A Mg(2+)-binding site is contributed by Asp-253. Residue Lys-396 is part of the active site. Thr-426 is modified (phosphothreonine). Ser-434 carries the post-translational modification Phosphoserine. An N6-acetyllysine modification is found at Lys-438. 2 positions are modified to phosphoserine: Ser-448 and Ser-461. The tract at residues 457-508 (HLTVSGDVTFGKNVSLKGTVIIIANHGDRIDIPPGAVLENKIVSGNLRILDH) is oligomerization. A critical for end-to-end subunit interaction region spans residues 502-503 (NL).

This sequence belongs to the UDPGP type 1 family. In terms of assembly, homooctamer.

The protein localises to the cytoplasm. The catalysed reaction is alpha-D-glucose 1-phosphate + UTP + H(+) = UDP-alpha-D-glucose + diphosphate. Its pathway is glycan biosynthesis; glycogen biosynthesis. Its function is as follows. UTP--glucose-1-phosphate uridylyltransferase catalyzing the conversion of glucose-1-phosphate into UDP-glucose, a crucial precursor for the production of glycogen. The sequence is that of UTP--glucose-1-phosphate uridylyltransferase (UGP2) from Cricetulus griseus (Chinese hamster).